The primary structure comprises 296 residues: UDP-N-acetylenolpyruvoylglucosamine reductase (296 aa).

The FAD-binding PCMH-type domain occupies R26–N191. R170 is an active-site residue. C218 (proton donor) is an active-site residue. E287 is a catalytic residue.

This sequence belongs to the MurB family. FAD serves as cofactor.

The protein resides in the cytoplasm. The catalysed reaction is UDP-N-acetyl-alpha-D-muramate + NADP(+) = UDP-N-acetyl-3-O-(1-carboxyvinyl)-alpha-D-glucosamine + NADPH + H(+). It participates in cell wall biogenesis; peptidoglycan biosynthesis. Functionally, cell wall formation. The protein is UDP-N-acetylenolpyruvoylglucosamine reductase of Chlamydia abortus (strain DSM 27085 / S26/3) (Chlamydophila abortus).